Here is a 639-residue protein sequence, read N- to C-terminus: Carbon monoxide dehydrogenase (639 aa).

[4Fe-4S] cluster-binding residues include C41, C49, C50, C53, C58, and C72. [Ni-4Fe-4S] cluster is bound by residues H265, C300, C338, C451, C481, and C531.

This sequence belongs to the Ni-containing carbon monoxide dehydrogenase family. In terms of assembly, homodimer. [4Fe-4S] cluster serves as cofactor. It depends on [Ni-4Fe-4S] cluster as a cofactor.

It is found in the cytoplasm. The protein localises to the cell inner membrane. The enzyme catalyses CO + 2 oxidized [2Fe-2S]-[ferredoxin] + H2O = 2 reduced [2Fe-2S]-[ferredoxin] + CO2 + 2 H(+). Functionally, allows growth in a CO-dependent manner in the dark. CODH oxidizes carbon monoxide coupled, via CooF, to the reduction of a hydrogen cation by a hydrogenase (possibly CooH). In Rhodospirillum rubrum, this protein is Carbon monoxide dehydrogenase (cooS).